The following is a 261-amino-acid chain: Sulfur carrier protein FdhD (261 aa).

The Cysteine persulfide intermediate role is filled by Cys105. A Mo-bis(molybdopterin guanine dinucleotide)-binding site is contributed by Phe245–Arg250.

Belongs to the FdhD family.

It is found in the cytoplasm. Its function is as follows. Required for formate dehydrogenase (FDH) activity. Acts as a sulfur carrier protein that transfers sulfur from IscS to the molybdenum cofactor prior to its insertion into FDH. The protein is Sulfur carrier protein FdhD of Listeria monocytogenes serotype 4b (strain F2365).